Consider the following 291-residue polypeptide: MSKSLDISTTEAEQTVTEVIDTIVATTPDVRRAVADYRGQSNSVNPTGDDQLAADLRADELFEQRVLGIDGVASYASEERADVKTTDGRLHVAMDPLDGSSNLEPNSGMGTIFGIYSEQPPTVGTNLLAAGFVIYGPITSMVVARDGSVREYILEDGDKRVVDDDVTVPEDPTVFGFGGGVDSWTDEFESYAEAVRHELKLRYGGAMVADINQVLTYGGIFSYPALESRPEGKLRVQFEGHPMAYILESAGGRSSDGDQSLLEIEPDELHERTPLYLGNDDLIDRLEANID.

Mg(2+)-binding residues include E78, D95, L97, and D98. Substrate-binding positions include 98 to 101, Y203, and K233; that span reads DGSS. E239 is a Mg(2+) binding site.

This sequence belongs to the FBPase class 1 family. In terms of assembly, homotetramer. Requires Mg(2+) as cofactor.

The protein localises to the cytoplasm. The catalysed reaction is beta-D-fructose 1,6-bisphosphate + H2O = beta-D-fructose 6-phosphate + phosphate. The protein operates within carbohydrate biosynthesis; gluconeogenesis. In Haloarcula marismortui (strain ATCC 43049 / DSM 3752 / JCM 8966 / VKM B-1809) (Halobacterium marismortui), this protein is Fructose-1,6-bisphosphatase class 1 1.